Reading from the N-terminus, the 365-residue chain is Forkhead box protein E4 (365 aa).

A compositionally biased stretch (basic and acidic residues) spans 1–13 (MDSPDSVRVKCES). Residues 1–46 (MDSPDSVRVKCESKGSCSPEEGLNNGLPEEHNQASGGRRRKRPVQR) form a disordered region. The segment at residues 48 to 142 (KPPYSYIALI…DNGSFLRRRK (95 aa)) is a DNA-binding region (fork-head).

As to expression, first expressed at the end of gastrulation (stage 13) in the anterior ectodermal placode. During intermediate neural plate stages (stages 14-16), expression expands to the presumptive nasal ectoderm (PNE) and the presumptive lens ectoderm (PLE). By stages 18-21, expression begins to deplete in the PNE, while intensifying in the PLE so that by late neural stages (stages 22), expression is restricted to the PLE. Throughout tailbud stages (stage 23-31), expression is maintained in the lens placode and lens vesicle. In the maturing lens (stage 32-onwards), expression is restricted to the anterior lens epithelium, where it remains during the tadpole stage. In tadpoles there is additional expression in the ventral midline of the pharynx. Expression continues in the adult eye.

Its subcellular location is the nucleus. Its function is as follows. Probable transcription factor. Mediates lens formation in the embryo by promoting the proliferation of the specified lens ectoderm and suppressing its terminal differentiation. The polypeptide is Forkhead box protein E4 (Xenopus laevis (African clawed frog)).